The sequence spans 323 residues: Ig gamma chain C region (323 aa).

3 Ig-like domains span residues 6–96 (PSVF…KTVA), 114–213 (PSVF…KTIS), and 222–318 (PKVY…KSIS).

The sequence is that of Ig gamma chain C region from Oryctolagus cuniculus (Rabbit).